Consider the following 736-residue polypeptide: Centrosomal protein kizuna (736 aa).

Residues 10–35 (HRAMKLQRNLRHCEGKRLELERELFQ) are a coiled coil. Residues 192–208 (NTSFQLSQKMPVTSVAS) are compositionally biased toward polar residues. Disordered regions lie at residues 192–238 (NTSF…SAQL), 279–305 (SFTH…DKHS), 323–348 (EDKQ…SYPP), and 642–690 (TVEE…NMST). The span at 210 to 219 (EDGRTHRAQI) shows a compositional bias: basic and acidic residues. Residues 328 to 339 (LDSSSDLTVSIS) are compositionally biased toward polar residues. Residues 658–668 (SETSFSSSEKS) are compositionally biased toward low complexity. Over residues 678–690 (IQPNYMKSNNMST) the composition is skewed to polar residues.

This sequence belongs to the kizuna family.

It is found in the cytoplasm. The protein localises to the cytoskeleton. Its subcellular location is the microtubule organizing center. The protein resides in the centrosome. It localises to the cilium basal body. Its function is as follows. Centrosomal protein required for establishing a robust mitotic centrosome architecture that can endure the forces that converge on the centrosomes during spindle formation. Required for stabilizing the expanded pericentriolar material around the centriole. In Xenopus laevis (African clawed frog), this protein is Centrosomal protein kizuna (kiz).